The primary structure comprises 229 residues: CMRF35-like molecule 6 (229 aa).

Residues 1-21 (MNPRVIRLWLPSAVLLSLVPG) form the signal peptide. In terms of domain architecture, Ig-like V-type spans 22 to 126 (HFPVRGPSTV…FYDAYLQIDK (105 aa)). At 22 to 188 (HFPVRGPSTV…ELRSLLSSPH (167 aa)) the chain is on the extracellular side. An intrachain disulfide couples C43 to C110. N90 and N99 each carry an N-linked (GlcNAc...) asparagine glycan. The helical transmembrane segment at 189-209 (FWILVSLKLPLFLSMLGALLW) threads the bilayer. Residues 210–229 (VNRPQRCSGGSSAWPCYENQ) are Cytoplasmic-facing.

It belongs to the CD300 family.

Its subcellular location is the cell membrane. The polypeptide is CMRF35-like molecule 6 (Cd300c) (Mus musculus (Mouse)).